Consider the following 120-residue polypeptide: Aspartate 1-decarboxylase (120 aa).

The active-site Schiff-base intermediate with substrate; via pyruvic acid is the serine 25. Serine 25 bears the Pyruvic acid (Ser) mark. Threonine 57 lines the substrate pocket. The active-site Proton donor is the tyrosine 58. 73–75 (GAA) lines the substrate pocket.

Belongs to the PanD family. Heterooctamer of four alpha and four beta subunits. Requires pyruvate as cofactor. In terms of processing, is synthesized initially as an inactive proenzyme, which is activated by self-cleavage at a specific serine bond to produce a beta-subunit with a hydroxyl group at its C-terminus and an alpha-subunit with a pyruvoyl group at its N-terminus.

The protein localises to the cytoplasm. The catalysed reaction is L-aspartate + H(+) = beta-alanine + CO2. It functions in the pathway cofactor biosynthesis; (R)-pantothenate biosynthesis; beta-alanine from L-aspartate: step 1/1. Catalyzes the pyruvoyl-dependent decarboxylation of aspartate to produce beta-alanine. This Coprothermobacter proteolyticus (strain ATCC 35245 / DSM 5265 / OCM 4 / BT) protein is Aspartate 1-decarboxylase.